Reading from the N-terminus, the 439-residue chain is MAFTVKDILSIQVAPALGCTEPAAVALCAAAAASLLPEKASIEALEVRVDPNIFKNGLAVLIPGTEGLSGLDMAAALGAIGGNPAKSLEVLGEVNPEHVKQAQALIKDGKIRLNLLADHKGLFIKVIVNAGENMAEAVVESMHDNITRMALDGVPVEKSSLIAPKESSKNARAAELESWLKGLGLKHLMDLLDDLDDEDLAFLEEGLDANMKLADYGLKHGPGLGVGKTLDRLMRQRLIARDMILDARILASAAADARMAGVNLPAMSSAGSGNHGLTAILPIKAVHKYLESDHESMLRAIGLSHIVTAFVKAFTGRLSAVCGCSVAAGAGATAGVTYLMGGNANHIADAIKNLMEDLAGIICDGAKSGCAFKLSTAAGTAVQAALFALQGVKVMETDGIIGASLEKTTQNLGALSTEGMIETDRTILKIMLEKQFSPD.

The protein belongs to the UPF0597 family.

The chain is UPF0597 protein Dalk_4447 from Desulfatibacillum aliphaticivorans.